Consider the following 241-residue polypeptide: Ribosomal RNA small subunit methyltransferase G (241 aa).

Residues G79, F84, 130 to 131 (AE), and R150 contribute to the S-adenosyl-L-methionine site.

The protein belongs to the methyltransferase superfamily. RNA methyltransferase RsmG family.

It localises to the cytoplasm. Its function is as follows. Specifically methylates the N7 position of a guanine in 16S rRNA. This is Ribosomal RNA small subunit methyltransferase G from Limosilactobacillus reuteri (strain DSM 20016) (Lactobacillus reuteri).